The chain runs to 155 residues: Interferon gamma (155 aa).

The signal sequence occupies residues 1–22 (MNATHCILALQLFLMAVSGCYC). N-linked (GlcNAc...) asparagine glycans are attached at residues Asn38 and Asn90.

It belongs to the type II (or gamma) interferon family. In terms of assembly, homodimer. Interacts with IFNGR1 (via extracellular domain); this interaction promotes IFNGR1 dimerization. As to expression, released primarily from activated T lymphocytes.

It is found in the secreted. In terms of biological role, type II interferon produced by immune cells such as T-cells and NK cells that plays crucial roles in antimicrobial, antiviral, and antitumor responses by activating effector immune cells and enhancing antigen presentation. Primarily signals through the JAK-STAT pathway after interaction with its receptor IFNGR1 to affect gene regulation. Upon IFNG binding, IFNGR1 intracellular domain opens out to allow association of downstream signaling components JAK2, JAK1 and STAT1, leading to STAT1 activation, nuclear translocation and transcription of IFNG-regulated genes. Many of the induced genes are transcription factors such as IRF1 that are able to further drive regulation of a next wave of transcription. Plays a role in class I antigen presentation pathway by inducing a replacement of catalytic proteasome subunits with immunoproteasome subunits. In turn, increases the quantity, quality, and repertoire of peptides for class I MHC loading. Increases the efficiency of peptide generation also by inducing the expression of activator PA28 that associates with the proteasome and alters its proteolytic cleavage preference. Up-regulates as well MHC II complexes on the cell surface by promoting expression of several key molecules such as cathepsins B/CTSB, H/CTSH, and L/CTSL. Participates in the regulation of hematopoietic stem cells during development and under homeostatic conditions by affecting their development, quiescence, and differentiation. The sequence is that of Interferon gamma (Ifng) from Mus musculus (Mouse).